The chain runs to 474 residues: Cysteine--tRNA ligase (474 aa).

Cys28 contributes to the Zn(2+) binding site. The short motif at 30–40 (ITVYDLCHLGH) is the 'HIGH' region element. Zn(2+) is bound by residues Cys209, His234, and Glu238. A 'KMSKS' region motif is present at residues 269–273 (KMSKS). Lys272 contacts ATP.

This sequence belongs to the class-I aminoacyl-tRNA synthetase family. As to quaternary structure, monomer. Requires Zn(2+) as cofactor.

It localises to the cytoplasm. The catalysed reaction is tRNA(Cys) + L-cysteine + ATP = L-cysteinyl-tRNA(Cys) + AMP + diphosphate. This chain is Cysteine--tRNA ligase, found in Blochmanniella floridana.